The sequence spans 209 residues: Protein Sxy (209 aa).

It belongs to the Sxy/TfoX family.

In terms of biological role, induces low levels of natural DNA uptake by inducing transcription of the competence genes (the CRP-S regulon) required for DNA transformation. Induction of the CRP-S regulon also requires Sxy-activated promoter (CRP-S), cAMP receptor protein (CRP) and cAMP. Induces CRP-S site-containing genes which are involved in genome maintenance and transcription or encoding transposases and toxin-antitoxin pairs. The polypeptide is Protein Sxy (Escherichia coli (strain K12)).